Consider the following 127-residue polypeptide: Promotilin (127 aa).

Positions 1–25 are cleaved as a signal peptide; it reads MLSRKAVAALLLVHVTAMLASQTEG. A disordered region spans residues 41 to 67; it reads REQNKRLRKSLRVQQRSKAAGRLEPQE.

It belongs to the motilin family. Present in the gut mucosa with the exception of the gastric corpus. Also present in medulla oblongata, nucleus of the solitary tract, hypophysis, spinal cord, hypothalamus, and cerebellum but not in the cerebral cortex.

The protein localises to the secreted. Its function is as follows. Plays an important role in the regulation of interdigestive gastrointestinal motility and indirectly causes rhythmic contraction of duodenal and colonic smooth muscle. This is Promotilin (MLN) from Cavia porcellus (Guinea pig).